A 271-amino-acid chain; its full sequence is Formamidopyrimidine-DNA glycosylase (271 aa).

The Schiff-base intermediate with DNA role is filled by proline 2. Glutamate 3 (proton donor) is an active-site residue. Catalysis depends on lysine 58, which acts as the Proton donor; for beta-elimination activity. 3 residues coordinate DNA: histidine 92, arginine 111, and arginine 152. The FPG-type zinc finger occupies 237–271 (SVYGREGEACKQCGRVLKHATIGQRATVWCGSCQR). The active-site Proton donor; for delta-elimination activity is arginine 261.

It belongs to the FPG family. Monomer. Requires Zn(2+) as cofactor.

It catalyses the reaction Hydrolysis of DNA containing ring-opened 7-methylguanine residues, releasing 2,6-diamino-4-hydroxy-5-(N-methyl)formamidopyrimidine.. The enzyme catalyses 2'-deoxyribonucleotide-(2'-deoxyribose 5'-phosphate)-2'-deoxyribonucleotide-DNA = a 3'-end 2'-deoxyribonucleotide-(2,3-dehydro-2,3-deoxyribose 5'-phosphate)-DNA + a 5'-end 5'-phospho-2'-deoxyribonucleoside-DNA + H(+). Involved in base excision repair of DNA damaged by oxidation or by mutagenic agents. Acts as a DNA glycosylase that recognizes and removes damaged bases. Has a preference for oxidized purines, such as 7,8-dihydro-8-oxoguanine (8-oxoG). Has AP (apurinic/apyrimidinic) lyase activity and introduces nicks in the DNA strand. Cleaves the DNA backbone by beta-delta elimination to generate a single-strand break at the site of the removed base with both 3'- and 5'-phosphates. This is Formamidopyrimidine-DNA glycosylase from Xanthomonas euvesicatoria pv. vesicatoria (strain 85-10) (Xanthomonas campestris pv. vesicatoria).